The following is a 585-amino-acid chain: Arginine--tRNA ligase (585 aa).

A 'HIGH' region motif is present at residues 131 to 141; it reads ANPTGPMHVGH.

Belongs to the class-I aminoacyl-tRNA synthetase family. Monomer.

It localises to the cytoplasm. The enzyme catalyses tRNA(Arg) + L-arginine + ATP = L-arginyl-tRNA(Arg) + AMP + diphosphate. In Agrobacterium fabrum (strain C58 / ATCC 33970) (Agrobacterium tumefaciens (strain C58)), this protein is Arginine--tRNA ligase.